A 293-amino-acid polypeptide reads, in one-letter code: Phosphatidylglycerol--prolipoprotein diacylglyceryl transferase (293 aa).

4 consecutive transmembrane segments (helical) span residues 45-65 (FELRWYSTLILMGFLISYFVA), 81-101 (ELIFYGVIAGIVGARLYYVLF), 115-135 (IWEGGLAIHGAVIGALLTGFL), and 144-164 (FTFLQATDLFTSVLPLGQAIG). Position 165 (Arg165) interacts with a 1,2-diacyl-sn-glycero-3-phospho-(1'-sn-glycerol). 3 consecutive transmembrane segments (helical) span residues 204–224 (PTFLYESIWDLLVFFMLSVYF), 231–249 (HGEVTCLYFVLYSLGRIVI), and 262–282 (IKAAQLLSAVLILLGFTGFLI).

It belongs to the Lgt family.

It is found in the cell inner membrane. It catalyses the reaction L-cysteinyl-[prolipoprotein] + a 1,2-diacyl-sn-glycero-3-phospho-(1'-sn-glycerol) = an S-1,2-diacyl-sn-glyceryl-L-cysteinyl-[prolipoprotein] + sn-glycerol 1-phosphate + H(+). Its pathway is protein modification; lipoprotein biosynthesis (diacylglyceryl transfer). Catalyzes the transfer of the diacylglyceryl group from phosphatidylglycerol to the sulfhydryl group of the N-terminal cysteine of a prolipoprotein, the first step in the formation of mature lipoproteins. The sequence is that of Phosphatidylglycerol--prolipoprotein diacylglyceryl transferase from Thermotoga maritima (strain ATCC 43589 / DSM 3109 / JCM 10099 / NBRC 100826 / MSB8).